The sequence spans 518 residues: Cytochrome P450 709B3 (518 aa).

Residues 3 to 23 (LISTINLLTIVLLLFVVSKIW) traverse the membrane as a helical segment. Cys-465 contributes to the heme binding site.

The protein belongs to the cytochrome P450 family. Requires heme as cofactor. In terms of tissue distribution, highly expressed in rosette leaves and siliques, and at lower levels in flowers.

It localises to the membrane. In terms of biological role, plays a role in abscisic acid (ABA) and salt stress response. May regulate the salt stress response independently of well-characterized pathways. Does not function as cytokinin hydroxylase in yeast heterologous system. In Arabidopsis thaliana (Mouse-ear cress), this protein is Cytochrome P450 709B3.